The primary structure comprises 283 residues: Protein/nucleic acid deglycase HchA (283 aa).

Residues His-86, Glu-91, and His-123 each contribute to the Zn(2+) site. Cys-185 (nucleophile) is an active-site residue.

This sequence belongs to the peptidase C56 family. HchA subfamily. As to quaternary structure, homodimer.

Its subcellular location is the cytoplasm. It catalyses the reaction N(omega)-(1-hydroxy-2-oxopropyl)-L-arginyl-[protein] + H2O = lactate + L-arginyl-[protein] + H(+). The enzyme catalyses N(6)-(1-hydroxy-2-oxopropyl)-L-lysyl-[protein] + H2O = lactate + L-lysyl-[protein] + H(+). It carries out the reaction S-(1-hydroxy-2-oxopropyl)-L-cysteinyl-[protein] + H2O = lactate + L-cysteinyl-[protein] + H(+). The catalysed reaction is N(omega)-(1-hydroxy-2-oxoethyl)-L-arginyl-[protein] + H2O = L-arginyl-[protein] + glycolate + H(+). It catalyses the reaction N(6)-(1-hydroxy-2-oxoethyl)-L-lysyl-[protein] + H2O = glycolate + L-lysyl-[protein] + H(+). The enzyme catalyses S-(1-hydroxy-2-oxoethyl)-L-cysteinyl-[protein] + H2O = glycolate + L-cysteinyl-[protein] + H(+). It carries out the reaction N(2)-(1-hydroxy-2-oxopropyl)-dGTP + H2O = lactate + dGTP + H(+). The catalysed reaction is N(2)-(1-hydroxy-2-oxopropyl)-GTP + H2O = lactate + GTP + H(+). It catalyses the reaction N(2)-(1-hydroxy-2-oxopropyl)-GDP + H2O = lactate + GDP + H(+). The enzyme catalyses N(2)-(1-hydroxy-2-oxopropyl)-GMP + H2O = lactate + GMP + H(+). It carries out the reaction N(2)-(1-hydroxy-2-oxoethyl)-dGTP + H2O = dGTP + glycolate + H(+). The catalysed reaction is N(2)-(1-hydroxy-2-oxoethyl)-GTP + H2O = glycolate + GTP + H(+). It catalyses the reaction N(2)-(1-hydroxy-2-oxoethyl)-GDP + H2O = glycolate + GDP + H(+). The enzyme catalyses N(2)-(1-hydroxy-2-oxoethyl)-GMP + H2O = glycolate + GMP + H(+). It carries out the reaction an N(2)-(1-hydroxy-2-oxopropyl)-guanosine in RNA + H2O = a guanosine in RNA + lactate + H(+). The catalysed reaction is an N(2)-(1-hydroxy-2-oxopropyl)-2'-deoxyguanosine in DNA + H2O = a 2'-deoxyguanosine in DNA + lactate + H(+). It catalyses the reaction an N(2)-(1-hydroxy-2-oxoethyl)-guanosine in RNA + H2O = a guanosine in RNA + glycolate + H(+). The enzyme catalyses an N(2)-(1-hydroxy-2-oxoethyl)-2'-deoxyguanosine in DNA + H2O = a 2'-deoxyguanosine in DNA + glycolate + H(+). In terms of biological role, protein and nucleotide deglycase that catalyzes the deglycation of the Maillard adducts formed between amino groups of proteins or nucleotides and reactive carbonyl groups of glyoxals. Thus, functions as a protein deglycase that repairs methylglyoxal- and glyoxal-glycated proteins, and releases repaired proteins and lactate or glycolate, respectively. Deglycates cysteine, arginine and lysine residues in proteins, and thus reactivates these proteins by reversing glycation by glyoxals. Acts on early glycation intermediates (hemithioacetals and aminocarbinols), preventing the formation of Schiff bases and advanced glycation endproducts (AGE). Also functions as a nucleotide deglycase able to repair glycated guanine in the free nucleotide pool (GTP, GDP, GMP, dGTP) and in DNA and RNA. Is thus involved in a major nucleotide repair system named guanine glycation repair (GG repair), dedicated to reversing methylglyoxal and glyoxal damage via nucleotide sanitization and direct nucleic acid repair. Plays an important role in protecting cells from carbonyl stress. The protein is Protein/nucleic acid deglycase HchA of Shigella sonnei (strain Ss046).